The chain runs to 264 residues: MDVYGLSSPDLLRIDDLLDFSNEDIFSASSSGGSTAATSSSSFPPPQNPSFHHHHLPSSADHHSFLHDICVPSDDAAHLEWLSQFVDDSFADFPANPLGGTMTSVKTETSFPGKPRSKRSRAPAPFAGTWSPMPLESEHQQLHSAAKFKPKKEQSGGGGGGGGRHQSSSSETTEGGGMRRCTHCASEKTPQWRTGPLGPKTLCNACGVRFKSGRLVPEYRPASSPTFVLTQHSNSHRKVMELRRQKEVMRQPQQVQLHHHHHPF.

The span at 29 to 42 shows a compositional bias: low complexity; the sequence is SSSGGSTAATSSSS. 2 disordered regions span residues 29 to 57 and 96 to 192; these read SSSG…HHLP and NPLG…TPQW. Positions 101–110 are enriched in polar residues; the sequence is TMTSVKTETS. The Nuclear localization signal motif lies at 114 to 121; sequence KPRSKRSR. Positions 155–164 are enriched in gly residues; the sequence is SGGGGGGGGR. The GATA-type zinc-finger motif lies at 175–229; sequence GGGMRRCTHCASEKTPQWRTGPLGPKTLCNACGVRFKSGRLVPEYRPASSPTFVL.

Belongs to the type IV zinc-finger family. Class A subfamily. In terms of tissue distribution, mostly expressed in roots. Also expressed in flowers and leaves, and to a lower extent in stems.

It localises to the nucleus. Functionally, transcriptional activator that specifically binds 5'-GATA-3' or 5'-GAT-3' motifs within gene promoters. May be involved in the regulation of some light-responsive genes. In Arabidopsis thaliana (Mouse-ear cress), this protein is GATA transcription factor 2 (GATA2).